A 187-amino-acid polypeptide reads, in one-letter code: High-affinity copper transporter ctrA2 (187 aa).

Transmembrane regions (helical) follow at residues 44-64 (YAGTCIFLVVLAIINRCLVAF) and 137-157 (AAIFLCITGVSYLLMLAVMTM).

Belongs to the copper transporter (Ctr) (TC 1.A.56) family. SLC31A subfamily.

It is found in the cell membrane. The enzyme catalyses Cu(2+)(in) = Cu(2+)(out). Its function is as follows. High-affinity copper transporter of plasma membrane that mediates copper uptake under low copper conditions. The mechanism driving the transmembrane transport of copper has still to be determined. Acts as a potential virulence factor. The protein is High-affinity copper transporter ctrA2 of Aspergillus fumigatus (strain ATCC MYA-4609 / CBS 101355 / FGSC A1100 / Af293) (Neosartorya fumigata).